Reading from the N-terminus, the 690-residue chain is Protein O-mannosyl-transferase F38B6.6 (690 aa).

A disordered region spans residues 1-24 (MKKHLHHKVSGSCDPGDRSPKEKG). Topologically, residues 1 to 32 (MKKHLHHKVSGSCDPGDRSPKEKGRSQGIRNL) are cytoplasmic. The segment covering 15–24 (PGDRSPKEKG) has biased composition (basic and acidic residues). A helical membrane pass occupies residues 33–53 (LILISLSIIPYLSCLGGDFVF). Residues 54-110 (DDAESIVNNPIVNGKDPLLQIFSRDFWGRSISSSNSHKSYRPVTTFTFWLNYKLHET) are Extracellular-facing. Residues 111–131 (STLGYHVVNIICHTVATLVFY) traverse the membrane as a helical segment. At 132 to 138 (KLGKQLE) the chain is on the cytoplasmic side. Residues 139–159 (HIFDFFNIAFSASILFAVHPV) traverse the membrane as a helical segment. The Extracellular portion of the chain corresponds to 160-166 (HTEAVAN). N-linked (GlcNAc...) asparagine glycosylation is present at N166. Residues 167–187 (ITGRAELLMTIFSLAALILHV) traverse the membrane as a helical segment. Over 188–234 (KNREINCKFVLLVILSTLSKEQGLMTIPIAICIDFLAHRSCRSNFVR) the chain is Cytoplasmic. The chain crosses the membrane as a helical span at residues 235-255 (MICLLVAIGFLRMMVNGFEAA). Topologically, residues 256–273 (KFTKLDNPTAFLNSKFYR) are extracellular. A helical transmembrane segment spans residues 274–294 (MINYTYIWLYHAYLLVIPVNL). The Cytoplasmic portion of the chain corresponds to 295-307 (CFDYSMGCISSIT). A helical membrane pass occupies residues 308–328 (TMWDLRALSPVLIFTIVIIGV). The Extracellular portion of the chain corresponds to 329 to 341 (KFQNECRAFTLSS). The helical transmembrane segment at 342 to 362 (LMGIISFLPASNIFFTVGFSI) threads the bilayer. Topologically, residues 363 to 365 (AER) are cytoplasmic. Residues 366–386 (VLYLPSAGFCLLCAIIFKKLS) traverse the membrane as a helical segment. At 387–690 (VHFKNADVLS…EHNCYNSTLP (304 aa)) the chain is on the extracellular side. 5 TPR repeats span residues 398–431 (TLIL…CPTN), 432–465 (AKIH…DPSY), 466–499 (EQAL…RPSF), 500–533 (AVAW…RPNS), and 534–567 (AHCL…DPSH). Residues N559, N600, and N617 are each glycosylated (N-linked (GlcNAc...) asparagine). 2 TPR repeats span residues 602–635 (SRVH…NPTS) and 636–669 (VLFH…DSKN). N686 carries an N-linked (GlcNAc...) asparagine glycan.

The protein belongs to the TMTC family.

It is found in the membrane. Its subcellular location is the endoplasmic reticulum. The catalysed reaction is a di-trans,poly-cis-dolichyl beta-D-mannosyl phosphate + L-seryl-[protein] = 3-O-(alpha-D-mannosyl)-L-seryl-[protein] + a di-trans,poly-cis-dolichyl phosphate + H(+). It carries out the reaction a di-trans,poly-cis-dolichyl beta-D-mannosyl phosphate + L-threonyl-[protein] = 3-O-(alpha-D-mannosyl)-L-threonyl-[protein] + a di-trans,poly-cis-dolichyl phosphate + H(+). Its pathway is protein modification; protein glycosylation. Its function is as follows. Transfers mannosyl residues to the hydroxyl group of serine or threonine residues. The protein is Protein O-mannosyl-transferase F38B6.6 of Caenorhabditis elegans.